Consider the following 185-residue polypeptide: Ribonuclease M5 (185 aa).

A Toprim domain is found at lysine 3 to glycine 84. Mg(2+)-binding residues include glutamate 9, aspartate 55, and aspartate 57.

Belongs to the ribonuclease M5 family. Mg(2+) serves as cofactor.

It is found in the cytoplasm. It catalyses the reaction Endonucleolytic cleavage of RNA, removing 21 and 42 nucleotides, respectively, from the 5'- and 3'-termini of a 5S-rRNA precursor.. In terms of biological role, required for correct processing of both the 5' and 3' ends of 5S rRNA precursor. Cleaves both sides of a double-stranded region yielding mature 5S rRNA in one step. The sequence is that of Ribonuclease M5 from Clostridium acetobutylicum (strain ATCC 824 / DSM 792 / JCM 1419 / IAM 19013 / LMG 5710 / NBRC 13948 / NRRL B-527 / VKM B-1787 / 2291 / W).